Consider the following 466-residue polypeptide: Citrate synthase, mitochondrial (466 aa).

The transit peptide at 1–27 (MALLTAAARLFGAKNASCLVLAARHAS) directs the protein to the mitochondrion. The SIFI-degron motif lies at 2 to 21 (ALLTAAARLFGAKNASCLVL). K57 bears the N6-succinyllysine mark. K76 is modified (N6-acetyllysine; alternate). K76 carries the N6-succinyllysine; alternate modification. 2 positions are modified to N6-succinyllysine: K103 and K193. At S226 the chain carries Phosphoserine. The active site involves H301. Residues K321 and K327 each carry the N6-acetyllysine; alternate modification. Residues K321 and K327 each carry the N6-succinyllysine; alternate modification. H347 is a catalytic residue. R356 contacts oxaloacetate. Position 375 is an N6-acetyllysine; alternate (K375). K375 carries the post-translational modification N6-succinyllysine; alternate. K382 carries the N6-acetyllysine modification. N6-acetyllysine; alternate is present on K393. K393 is modified (N6-succinyllysine; alternate). K395 is subject to N6,N6,N6-trimethyllysine. The active site involves D402. Oxaloacetate is bound by residues R428 and R448. N6-succinyllysine is present on K450. The residue at position 459 (K459) is an N6-acetyllysine; alternate. An N6-succinyllysine; alternate modification is found at K459.

Belongs to the citrate synthase family. As to quaternary structure, homodimer. Post-translationally, methylated. Trimethylation at Lys-395 by CSKMT decreases citrate synthase activity. In terms of processing, in response to mitochondrial stress, the precursor protein is ubiquitinated by the SIFI complex in the cytoplasm before mitochondrial import, leading to its degradation. Within the SIFI complex, UBR4 initiates ubiquitin chain that are further elongated or branched by KCMF1.

It localises to the mitochondrion matrix. The catalysed reaction is oxaloacetate + acetyl-CoA + H2O = citrate + CoA + H(+). It participates in carbohydrate metabolism; tricarboxylic acid cycle; isocitrate from oxaloacetate: step 1/2. Key enzyme of the Krebs tricarboxylic acid cycle which catalyzes the synthesis of citrate from acetyl coenzyme A and oxaloacetate. This Bos taurus (Bovine) protein is Citrate synthase, mitochondrial (CS).